The sequence spans 317 residues: Olfactory receptor 1082 (317 aa).

At 1-26 (MESGNSTRRFSSFFLLGFTENPQLHF) the chain is on the extracellular side. A glycan (N-linked (GlcNAc...) asparagine) is linked at Asn-5. Residues 27–51 (LIFALFLSMYLVTVLGNLLIIMAII) traverse the membrane as a helical segment. Topologically, residues 52 to 58 (TQSHLHT) are cytoplasmic. A helical membrane pass occupies residues 59-80 (PMYFFLANLSFVDICFTSTTIP). The Extracellular segment spans residues 81-101 (KMLVNIYTQSKSITYEDCISQ). Cys-98 and Cys-190 are joined by a disulfide. Residues 102 to 121 (MCVFLVFAELGNFLLAVMAY) traverse the membrane as a helical segment. The Cytoplasmic portion of the chain corresponds to 122–140 (DRYVAXCHPLCYTVIVNHR). The helical transmembrane segment at 141–159 (LCILLLLLSWVISIFHAFI) threads the bilayer. Over 160-197 (QSLIVLQLTFCGDVKIPHFFCELNQLSQLTCSDNFPSH) the chain is Extracellular. Residues 198-220 (LIMNLVPVMLAAISFSGILYSYF) traverse the membrane as a helical segment. Residues 221–237 (KIVSSIHSISTVQGKYK) are Cytoplasmic-facing. The helical transmembrane segment at 238 to 261 (AFSTCASHLSIVSLFYSTGLGVYV) threads the bilayer. At 262–273 (SSAVVQSSHSAA) the chain is on the extracellular side. The chain crosses the membrane as a helical span at residues 274–293 (SASVMYTVVTPMLNPFIYSL). Topologically, residues 294–317 (RNKDVKRALERLLEGNCKVHHWTG) are cytoplasmic.

Belongs to the G-protein coupled receptor 1 family. Olfactory epithelium.

The protein resides in the cell membrane. Its function is as follows. Odorant receptor. In Rattus norvegicus (Rat), this protein is Olfactory receptor 1082 (Olr1082).